Here is a 182-residue protein sequence, read N- to C-terminus: Heat shock protein beta-2 (182 aa).

A sHSP domain is found at 55-163; sequence RAGEGARAGA…DTEVNEVYIS (109 aa).

It belongs to the small heat shock protein (HSP20) family. In terms of assembly, interacts with DMPK; may enhance its kinase activity.

It is found in the cytoplasm. The protein localises to the nucleus. May regulate the kinase DMPK. The sequence is that of Heat shock protein beta-2 (Hspb2) from Mus musculus (Mouse).